Here is a 276-residue protein sequence, read N- to C-terminus: Secreted LysM effector LysM10 (276 aa).

Residues 1–22 (MLLSLVKFGILSVFLLAQEAVA) form the signal peptide. Residues Asn27, Asn104, and Asn140 are each glycosylated (N-linked (GlcNAc...) asparagine). The region spanning 219-264 (KTYIAKEDDTCKSISEAQSISTDRLVEVNHLDYSCSSLTSGTALCI) is the LysM domain. Asn267 carries N-linked (GlcNAc...) asparagine glycosylation.

The protein belongs to the secreted LysM effector family.

Its subcellular location is the secreted. Its function is as follows. Secreted LysM effector that might have a role in sequestration of chitin oligosaccharides (breakdown products of fungal cell walls that are released during invasion and act as triggers of host immunity) to dampen host defense. In Penicillium expansum (Blue mold rot fungus), this protein is Secreted LysM effector LysM10.